A 209-amino-acid chain; its full sequence is Potassium-transporting ATPase KdpC subunit (209 aa).

Residues 18–38 (MLAVFTLFGLGLAYSLVATGI) form a helical membrane-spanning segment.

Belongs to the KdpC family. As to quaternary structure, the system is composed of three essential subunits: KdpA, KdpB and KdpC.

The protein resides in the cell inner membrane. Its function is as follows. Part of the high-affinity ATP-driven potassium transport (or Kdp) system, which catalyzes the hydrolysis of ATP coupled with the electrogenic transport of potassium into the cytoplasm. This subunit acts as a catalytic chaperone that increases the ATP-binding affinity of the ATP-hydrolyzing subunit KdpB by the formation of a transient KdpB/KdpC/ATP ternary complex. This Xanthomonas oryzae pv. oryzae (strain MAFF 311018) protein is Potassium-transporting ATPase KdpC subunit.